Reading from the N-terminus, the 325-residue chain is 5-dehydro-2-deoxygluconokinase (325 aa).

This sequence belongs to the carbohydrate kinase PfkB family.

The enzyme catalyses 5-dehydro-2-deoxy-D-gluconate + ATP = 6-phospho-5-dehydro-2-deoxy-D-gluconate + ADP + H(+). It functions in the pathway polyol metabolism; myo-inositol degradation into acetyl-CoA; acetyl-CoA from myo-inositol: step 5/7. Its function is as follows. Catalyzes the phosphorylation of 5-dehydro-2-deoxy-D-gluconate (2-deoxy-5-keto-D-gluconate or DKG) to 6-phospho-5-dehydro-2-deoxy-D-gluconate (DKGP). The protein is 5-dehydro-2-deoxygluconokinase of Bacillus licheniformis (strain ATCC 14580 / DSM 13 / JCM 2505 / CCUG 7422 / NBRC 12200 / NCIMB 9375 / NCTC 10341 / NRRL NRS-1264 / Gibson 46).